The sequence spans 463 residues: Interleukin enhancer-binding factor 2 (463 aa).

Arginine 94 is modified (asymmetric dimethylarginine; alternate). At arginine 94 the chain carries Omega-N-methylarginine; alternate. The region spanning 108 to 444 is the DZF domain; sequence RHILAYDWLA…PEKKEGEEEE (337 aa). Arginine 145 carries the post-translational modification Omega-N-methylarginine. A Glycyl lysine isopeptide (Lys-Gly) (interchain with G-Cter in ubiquitin) cross-link involves residue lysine 166. Phosphoserine is present on residues serine 173 and serine 189. Glycyl lysine isopeptide (Lys-Gly) (interchain with G-Cter in SUMO2) cross-links involve residues lysine 259 and lysine 437. A disordered region spans residues 424–463; sequence VTPSEKAYEKPPEKKEGEEEEENTEEPPQGEEEESMETQE. A compositionally biased stretch (basic and acidic residues) spans 429–440; sequence KAYEKPPEKKEG. The span at 441–463 shows a compositional bias: acidic residues; it reads EEEEENTEEPPQGEEEESMETQE. Threonine 461 carries the post-translational modification Phosphothreonine.

Forms heterodimers with ILF3. ILF2-ILF3 heterodimers may also bind to PRKDC/XRCC7: this may stabilize the interaction of PRKDC/XRCC7 and the heterodimeric complex of G22P1/KU70 and XRCC5/KU80. Forms a complex with ILF3, YLPM1, KHDRBS1, RBMX, NCOA5 and PPP1CA. Identified in a IGF2BP1-dependent mRNP granule complex containing untranslated mRNAs. Interacts with IGF2BP1. Interacts with CRBN; this interaction promotes ubiquitination and subsequent degradation of ILF2. Ubiquitinated at Lys-166 by CRBN with polyubiquitin chains by the CUL4-RING E3 ligase (CRL4-CRBN) and then degraded by the proteasome.

The protein localises to the nucleus. Its subcellular location is the nucleolus. It localises to the cytoplasm. In terms of biological role, chromatin-interacting protein that forms a stable heterodimer with interleukin enhancer-binding factor 3/ILF3 and plays a role in several biological processes including transcription, innate immunity or cell growth. Essential for the efficient reshuttling of ILF3 (isoform 1 and isoform 2) into the nucleus. Together with ILF3, forms an RNA-binding complex that is required for mitotic progression and cytokinesis by regulating the expression of a cluster of mitotic genes. Mechanistically, competes with STAU1/STAU2-mediated mRNA decay. Plays also a role in the inhibition of various viruses including Japanese encephalitis virus or enterovirus 71. This chain is Interleukin enhancer-binding factor 2 (Ilf2), found in Rattus norvegicus (Rat).